Reading from the N-terminus, the 20-residue chain is Pregnancy-associated glycoprotein 73B (20 aa).

It belongs to the peptidase A1 family. N-glycosylated. As to expression, expressed in chorionic epithelium (trophectoderm).

It localises to the secreted. The protein localises to the extracellular space. The protein is Pregnancy-associated glycoprotein 73B of Bubalus bubalis (Domestic water buffalo).